We begin with the raw amino-acid sequence, 458 residues long: Monomethylamine methyltransferase MtmB1 (458 aa).

Residue Pyl-202 is a non-standard amino acid, pyrrolysine.

It belongs to the monomethylamine methyltransferase family. In terms of assembly, dimer of homotrimers. Can form a complex with MtmC (MtmC1 or MtmC2).

The catalysed reaction is Co(I)-[methylamine-specific corrinoid protein] + methylamine + H(+) = methyl-Co(III)-[methylamine-specific corrinoid protein] + NH4(+). The protein operates within one-carbon metabolism; methanogenesis from methylamine. In terms of biological role, catalyzes the transfer of the methyl group from monomethylamine to the corrinoid cofactor of MtmC (MtmC1 or MtmC2). This chain is Monomethylamine methyltransferase MtmB1 (mtmB1), found in Methanosarcina barkeri.